Reading from the N-terminus, the 146-residue chain is Anti-sigma F factor (146 aa).

Belongs to the anti-sigma-factor family.

It catalyses the reaction L-seryl-[protein] + ATP = O-phospho-L-seryl-[protein] + ADP + H(+). The enzyme catalyses L-threonyl-[protein] + ATP = O-phospho-L-threonyl-[protein] + ADP + H(+). Its function is as follows. Binds to sigma F and blocks its ability to form an RNA polymerase holoenzyme (E-sigma F). Phosphorylates SpoIIAA on a serine residue. This phosphorylation may enable SpoIIAA to act as an anti-anti-sigma factor that counteracts SpoIIAB and thus releases sigma F from inhibition. This is Anti-sigma F factor from Bacillus licheniformis.